Here is a 549-residue protein sequence, read N- to C-terminus: Cytoplasmic trehalase (549 aa).

Residues arginine 168, 175–176, asparagine 212, 221–223, 292–294, and glycine 324 each bind substrate; these read WD, RSQ, and RDE. Residues aspartate 326 and glutamate 509 each act as proton donor/acceptor in the active site. A substrate-binding site is contributed by glutamate 525.

It belongs to the glycosyl hydrolase 37 family. In terms of assembly, monomer.

It is found in the cytoplasm. It catalyses the reaction alpha,alpha-trehalose + H2O = alpha-D-glucose + beta-D-glucose. The protein operates within glycan degradation; trehalose degradation; D-glucose from alpha,alpha-trehalose: step 1/1. Hydrolyzes trehalose to glucose. Could be involved, in cells returning to low osmolarity conditions, in the utilization of the accumulated cytoplasmic trehalose, which was synthesized in response to high osmolarity. This is Cytoplasmic trehalase from Escherichia coli (strain 55989 / EAEC).